We begin with the raw amino-acid sequence, 566 residues long: Putative ankyrin repeat protein RF_0987 (566 aa).

Disordered regions lie at residues 61–118 (KKKN…HENS), 276–314 (PPVM…SAEI), and 355–392 (VNNN…SEST). The segment covering 78–92 (NQEEPKLASQEHTEA) has biased composition (basic and acidic residues). Residues 101 to 112 (TGNTALPSVTAS) show a composition bias toward polar residues. The segment covering 296 to 308 (TPVTTPSKVVPTT) has biased composition (low complexity). Residues 365–378 (EKSPPVSSSNVTIQ) are compositionally biased toward polar residues. ANK repeat units lie at residues 506 to 535 (SGET…KIST) and 539 to 566 (ECQY…KGYQ).

This chain is Putative ankyrin repeat protein RF_0987, found in Rickettsia felis (strain ATCC VR-1525 / URRWXCal2) (Rickettsia azadi).